The sequence spans 311 residues: Malate dehydrogenase (311 aa).

Residues Gly-7–Gly-13 and Asp-34 each bind NAD(+). The substrate site is built by Arg-81 and Arg-87. NAD(+) is bound by residues Asn-94 and Ile-117–Asn-119. 2 residues coordinate substrate: Asn-119 and Arg-153. His-177 (proton acceptor) is an active-site residue. Residue Met-227 coordinates NAD(+).

The protein belongs to the LDH/MDH superfamily. MDH type 1 family. Homodimer.

It catalyses the reaction (S)-malate + NAD(+) = oxaloacetate + NADH + H(+). Catalyzes the reversible oxidation of malate to oxaloacetate. The chain is Malate dehydrogenase from Vibrio atlanticus (strain LGP32) (Vibrio splendidus (strain Mel32)).